The sequence spans 568 residues: Sphingosine-1-phosphate lyase 1 (568 aa).

At 1-41 the chain is on the lumenal side; sequence MPSTDLLKLKDFEPYLEILEAYSTKAKNYVNGYCTKYEPWQ. Residues 42–62 traverse the membrane as a helical; Signal-anchor for type III membrane protein segment; the sequence is LIAGSVLCTLLVVWVYELIFQ. Topologically, residues 63–568 are cytoplasmic; that stretch reads PESLWSRFKN…NQMNGSPKPR (506 aa). Position 353 is an N6-(pyridoxal phosphate)lysine; alternate (Lys-353). An N6-acetyllysine; alternate modification is found at Lys-353. 3'-nitrotyrosine occurs at positions 356 and 366. Ser-564 is subject to Phosphoserine.

Belongs to the group II decarboxylase family. Sphingosine-1-phosphate lyase subfamily. In terms of assembly, homodimer. Pyridoxal 5'-phosphate serves as cofactor.

It is found in the endoplasmic reticulum membrane. It carries out the reaction sphinganine 1-phosphate = hexadecanal + phosphoethanolamine. The enzyme catalyses sphing-4-enine 1-phosphate = (2E)-hexadecenal + phosphoethanolamine. Its pathway is lipid metabolism; sphingolipid metabolism. Functionally, cleaves phosphorylated sphingoid bases (PSBs), such as sphingosine-1-phosphate, into fatty aldehydes and phosphoethanolamine. Elevates stress-induced ceramide production and apoptosis. Required for global lipid homeostasis in liver and cholesterol homeostasis in fibroblasts. Involved in the regulation of pro-inflammatory response and neutrophil trafficking. Modulates neuronal autophagy via phosphoethanolamine production which regulates accumulation of aggregate-prone proteins such as APP. Seems to play a role in establishing neuronal contact sites and axonal maintenance. The polypeptide is Sphingosine-1-phosphate lyase 1 (Rattus norvegicus (Rat)).